We begin with the raw amino-acid sequence, 446 residues long: Na(+)-translocating NADH-quinone reductase subunit A (446 aa).

The protein belongs to the NqrA family. In terms of assembly, composed of six subunits; NqrA, NqrB, NqrC, NqrD, NqrE and NqrF.

It carries out the reaction a ubiquinone + n Na(+)(in) + NADH + H(+) = a ubiquinol + n Na(+)(out) + NAD(+). Functionally, NQR complex catalyzes the reduction of ubiquinone-1 to ubiquinol by two successive reactions, coupled with the transport of Na(+) ions from the cytoplasm to the periplasm. NqrA to NqrE are probably involved in the second step, the conversion of ubisemiquinone to ubiquinol. This chain is Na(+)-translocating NADH-quinone reductase subunit A, found in Psychromonas ingrahamii (strain DSM 17664 / CCUG 51855 / 37).